The following is a 62-amino-acid chain: Large ribosomal subunit protein eL24 (62 aa).

4 residues coordinate Zn(2+): Cys6, Cys9, Cys32, and Cys36. A C4-type zinc finger spans residues 6 to 36 (CYFCGKMLEPGTGKLYVKKDGSTYFMCSSKC).

This sequence belongs to the eukaryotic ribosomal protein eL24 family. As to quaternary structure, part of the 50S ribosomal subunit. Forms a cluster with proteins L3 and L14. Requires Zn(2+) as cofactor.

Its function is as follows. Binds to the 23S rRNA. The polypeptide is Large ribosomal subunit protein eL24 (Methanosarcina acetivorans (strain ATCC 35395 / DSM 2834 / JCM 12185 / C2A)).